Consider the following 188-residue polypeptide: UPF0301 protein XF_2228 (188 aa).

The protein belongs to the UPF0301 (AlgH) family.

The sequence is that of UPF0301 protein XF_2228 from Xylella fastidiosa (strain 9a5c).